Consider the following 248-residue polypeptide: Sugar fermentation stimulation protein homolog (248 aa).

Belongs to the SfsA family.

The chain is Sugar fermentation stimulation protein homolog from Prochlorococcus marinus subsp. pastoris (strain CCMP1986 / NIES-2087 / MED4).